Here is a 203-residue protein sequence, read N- to C-terminus: Histidine biosynthesis bifunctional protein HisIE (203 aa).

The tract at residues 1–114 (MLTEQQRREL…FGDASHQWLF (114 aa)) is phosphoribosyl-AMP cyclohydrolase. Positions 115–203 (LYQLEQLLAE…VIDDLRKRHQ (89 aa)) are phosphoribosyl-ATP pyrophosphohydrolase.

The protein in the N-terminal section; belongs to the PRA-CH family. It in the C-terminal section; belongs to the PRA-PH family.

The protein resides in the cytoplasm. The enzyme catalyses 1-(5-phospho-beta-D-ribosyl)-ATP + H2O = 1-(5-phospho-beta-D-ribosyl)-5'-AMP + diphosphate + H(+). The catalysed reaction is 1-(5-phospho-beta-D-ribosyl)-5'-AMP + H2O = 1-(5-phospho-beta-D-ribosyl)-5-[(5-phospho-beta-D-ribosylamino)methylideneamino]imidazole-4-carboxamide. The protein operates within amino-acid biosynthesis; L-histidine biosynthesis; L-histidine from 5-phospho-alpha-D-ribose 1-diphosphate: step 2/9. Its pathway is amino-acid biosynthesis; L-histidine biosynthesis; L-histidine from 5-phospho-alpha-D-ribose 1-diphosphate: step 3/9. The sequence is that of Histidine biosynthesis bifunctional protein HisIE (hisI) from Salmonella typhi.